The following is a 353-amino-acid chain: UDP-galactose transporter (353 aa).

Transmembrane regions (helical) follow at residues Leu147–Leu167, Val184–Phe204, Leu215–Leu235, Ile254–Ala274, Ile279–Leu299, and Phe302–Tyr322. The disordered stretch occupies residues Pro325 to His353. Residues Pro329–Asp343 show a composition bias toward polar residues.

Belongs to the nucleotide-sugar transporter family. SLC35A subfamily.

It is found in the golgi apparatus membrane. Essential for the transport of UDP-galactose into the lumen of Golgi apparatus. The polypeptide is UDP-galactose transporter (gms1) (Schizosaccharomyces pombe (strain 972 / ATCC 24843) (Fission yeast)).